The sequence spans 96 residues: Co-chaperonin GroES (96 aa).

This sequence belongs to the GroES chaperonin family. As to quaternary structure, heptamer of 7 subunits arranged in a ring. Interacts with the chaperonin GroEL.

The protein localises to the cytoplasm. Functionally, together with the chaperonin GroEL, plays an essential role in assisting protein folding. The GroEL-GroES system forms a nano-cage that allows encapsulation of the non-native substrate proteins and provides a physical environment optimized to promote and accelerate protein folding. GroES binds to the apical surface of the GroEL ring, thereby capping the opening of the GroEL channel. The polypeptide is Co-chaperonin GroES (Tremblaya princeps).